A 109-amino-acid polypeptide reads, in one-letter code: Sulredoxin (109 aa).

The 105-residue stretch at 3-107 (WKRTISAKAL…IRDNNGWIEV (105 aa)) folds into the Rieske domain. Cys43, His45, Cys62, and His65 together coordinate [2Fe-2S] cluster.

In terms of assembly, homooligomeric. It depends on [2Fe-2S] cluster as a cofactor.

It localises to the cytoplasm. Functionally, not yet known. This is Sulredoxin (sdx) from Sulfurisphaera tokodaii (strain DSM 16993 / JCM 10545 / NBRC 100140 / 7) (Sulfolobus tokodaii).